Consider the following 503-residue polypeptide: Cytochrome P450 3A8 (503 aa).

C442 contacts heme.

This sequence belongs to the cytochrome P450 family. Heme is required as a cofactor.

It localises to the endoplasmic reticulum membrane. The protein resides in the microsome membrane. It carries out the reaction an organic molecule + reduced [NADPH--hemoprotein reductase] + O2 = an alcohol + oxidized [NADPH--hemoprotein reductase] + H2O + H(+). Its function is as follows. Catalyzes nifedipine and nilvadipine oxidations. The sequence is that of Cytochrome P450 3A8 (CYP3A8) from Macaca fascicularis (Crab-eating macaque).